The chain runs to 1838 residues: Type III effector DspE (1838 aa).

Residues 1–12 (MELKSLGTEHKA) are compositionally biased toward basic and acidic residues. Disordered regions lie at residues 1–72 (MELK…AAHQ), 86–163 (KKFS…PTQQ), 182–264 (MAHP…VATP), 281–300 (LEGTDTTQSPLKPQSMLKGS), 398–418 (DGKSGKISLGSGTQSHNKTML), and 1480–1505 (NLAAGSRERSTTSGQFGSTTSASNNR). Over residues 27–46 (ALQQGSSSSSPQNAAASLAA) the composition is skewed to low complexity. A compositionally biased stretch (polar residues) spans 91 to 103 (SAPQGQPGTTHSK). The segment covering 110–120 (LLARDDGETQH) has biased composition (basic and acidic residues). Positions 407-418 (GSGTQSHNKTML) are enriched in polar residues. Residues 1480 to 1502 (NLAAGSRERSTTSGQFGSTTSAS) are compositionally biased toward low complexity.

This sequence belongs to the AvrE family. In terms of assembly, interacts with the chaperone DspF (DspB/F).

Its subcellular location is the secreted. It localises to the host cell. With respect to regulation, polyamidoamine dendrimers inhibit channel and virulence activities. Functionally, major virulence factor that may function as a water- and solute-permeable channel dedicated to creating osmotic/water potential perturbation and a water- and nutrient-rich apoplast in which bacteria multiply within the infected plant tissues. Expression in Xenopus oocytes results in inward and outward currents, permeability to water and osmolarity-dependent oocyte swelling and bursting. Its function is as follows. Acts as a major cell-death inducer during fire blight, a necrotic disease affecting plants of the rosaceous family, and during hypersensitive response (HR) on non-host plants. Essential for pathogenicity on host plants. Contributes quantitatively and in a strain-dependent fashion to HR elicitation in non-host plants such as tobacco. Induces cell death in leaves of apple, a host plant, and tobacco, a non-host plant. Also triggers necrosis in the widely used model, non-host, N.benthamiana and in yeast. Required for the transient multiplication and survival of E.amylovora in non-host A.thaliana leaves. In A.thaliana, triggers electrolyte leakage, activation of defense pathways, reactive oxygen species (ROS) accumulation and cell death. The toxicity of DspE in A.thaliana is associated with an early repression of de novo protein synthesis. The chain is Type III effector DspE from Erwinia amylovora (Fire blight bacteria).